A 198-amino-acid polypeptide reads, in one-letter code: Nuclear transcription factor Y subunit A-4 (198 aa).

Positions 1-47 are disordered; sequence MTSSVHELSDNNESHAKKERPDSQTRPQVPSGRSSESIDTNSVYSEP. A compositionally biased stretch (basic and acidic residues) spans 7–23; it reads ELSDNNESHAKKERPDS. Residues 24 to 44 are compositionally biased toward polar residues; the sequence is QTRPQVPSGRSSESIDTNSVY. The Subunit association domain (SAD) motif lies at 101–124; it reads FVNAKQYHGILRRRQSRAKLEARN. The segment at residues 131 to 156 is a DNA-binding region (NFYA/HAP2-type); sequence KPYMHESRHLHAIRRPRGCGGRFLNA. The segment at 136–198 is disordered; it reads ESRHLHAIRR…MATSGPNGRS (63 aa). Basic and acidic residues predominate over residues 156–166; that stretch reads AKKENGDHKEE.

It belongs to the NFYA/HAP2 subunit family. Heterotrimeric transcription factor composed of three components, NF-YA, NF-YB and NF-YC. NF-YB and NF-YC must interact and dimerize for NF-YA association and DNA binding. In terms of tissue distribution, expressed in stems, caulines, and senescent flowers.

It is found in the nucleus. In terms of biological role, stimulates the transcription of various genes by recognizing and binding to a CCAAT motif in promoters. This chain is Nuclear transcription factor Y subunit A-4 (NFYA4), found in Arabidopsis thaliana (Mouse-ear cress).